We begin with the raw amino-acid sequence, 465 residues long: Na(+)-translocating NADH-quinone reductase subunit A (465 aa).

This sequence belongs to the NqrA family. In terms of assembly, composed of six subunits; NqrA, NqrB, NqrC, NqrD, NqrE and NqrF.

It carries out the reaction a ubiquinone + n Na(+)(in) + NADH + H(+) = a ubiquinol + n Na(+)(out) + NAD(+). Functionally, NQR complex catalyzes the reduction of ubiquinone-1 to ubiquinol by two successive reactions, coupled with the transport of Na(+) ions from the cytoplasm to the periplasm. NqrA to NqrE are probably involved in the second step, the conversion of ubisemiquinone to ubiquinol. The chain is Na(+)-translocating NADH-quinone reductase subunit A from Chlamydia trachomatis serovar L2b (strain UCH-1/proctitis).